The chain runs to 224 residues: tRNA (guanine-N(7)-)-methyltransferase (224 aa).

Residues Glu54, Glu79, Glu106, and Asp129 each contribute to the S-adenosyl-L-methionine site. Asp129 is a catalytic residue. Substrate contacts are provided by Lys133 and Asp165.

Belongs to the class I-like SAM-binding methyltransferase superfamily. TrmB family.

It carries out the reaction guanosine(46) in tRNA + S-adenosyl-L-methionine = N(7)-methylguanosine(46) in tRNA + S-adenosyl-L-homocysteine. Its pathway is tRNA modification; N(7)-methylguanine-tRNA biosynthesis. Catalyzes the formation of N(7)-methylguanine at position 46 (m7G46) in tRNA. The protein is tRNA (guanine-N(7)-)-methyltransferase of Chlamydia trachomatis serovar D (strain ATCC VR-885 / DSM 19411 / UW-3/Cx).